The following is an 864-amino-acid chain: E3 ubiquitin-protein ligase Itchy (864 aa).

Residues 1 to 115 (MSDSGPQLDS…LKSNNMKLEE (115 aa)) enclose the C2 domain. The residue at position 2 (Ser2) is an N-acetylserine. Polar residues predominate over residues 151 to 164 (NGETSCSESTTQND). The disordered stretch occupies residues 151–294 (NGETSCSEST…SQAPLPPGWE (144 aa)). Residues 165-174 (DGCRTRDDTR) show a composition bias toward basic and acidic residues. Residues 195-206 (NGNNSPSLSNGG) are compositionally biased toward low complexity. Residue Ser199 is modified to Phosphoserine; by MAPK8. Over residues 210–224 (SRPPRPSRPPPPTPR) the composition is skewed to pro residues. At Thr222 the chain carries Phosphothreonine; by MAPK8. Residues 230–259 (NGSPSTNSDSDGSSTGSLPPTNTNVNTSTS) show a composition bias toward low complexity. Ser232 is subject to Phosphoserine; by MAPK8. WW domains are found at residues 287–320 (APLP…RPEP) and 319–352 (EPLP…RPTL). Phosphothreonine; by SGK3 is present on Thr346. The interval 356–432 (RNYEQWQLQR…RITQWEDPRS (77 aa)) is required for interaction with FYN. Residue Tyr381 is modified to Phosphotyrosine; by FYN. 2 consecutive WW domains span residues 399–432 (GPLP…DPRS) and 439–472 (KPLP…DPRT). At Ser411 the chain carries Phosphoserine; by SGK3. One can recognise an HECT domain in the interval 530–864 (SPQDLRRRLW…IEETEGFGQE (335 aa)). The MAP kinase docking site stretch occupies residues 535–544 (RRRLWVIFPG). The active-site Glycyl thioester intermediate is the Cys832.

Monomer. Part of a ternary complex composed of SMAD3, ITCH/AIP4 and NEDD9/HEF1; within the complex NEDD9/HEF1 interacts (via N-terminus) with ITCH/AIP4 (via WW domains); the complex mediates ubiquitination and proteasomal degradation of NEDD9/HEF1. Interacts (via WW domains) with OCNL. Interacts (via WW domains) with NOTCH1. Interacts (via WW domains) JUN. Interacts with JUNB; the interaction promotes ITCH-mediated ubiquitination and degradation of JUNB. Interacts with FYN; the interaction phosphorylates ITCH on Tyr-381 decreasing binding of JUNB. Interacts (via WW domain 2) with N4BP1; the interaction inhibits the E3 ubiquitin-protein ligase activity. Interacts with NDFIP1 and NDFIP2; the interaction with NDFIP proteins activates the E3 ubiquitin-protein ligase and may induce its recruitment to exosomes. Interacts with ARHGEF7. Interacts with RNF11. Interacts (via the WW 1 domain) with NFE2 (via the PXY motif 1); the interaction promotes 'Lys-63'-linked ubiquitination of NFE2, retains it in the cytoplasm and prevents its transactivation activity. Interacts (via WW domains) with CXCR4 (via C-terminus); the interaction depends on CXCR4 phosphorylation. Found in a complex with E3 ligase DTX3L and ESCRT-0 components HGS and STAM. Interacts with DTX3L (via C-terminus); the interaction is increased upon CXCL12 stimulation and inhibits ITCH catalytic activity (the interaction is direct). Interacts with HGS. Interacts (via WW domains) with PCBP2 within a complex containing ITCH, MAVS and PCBP2. Interacts (via WW domains) with TXNIP (via C-terminus). Interacts with p15 BID. Interacts with ERBB4. Interacts with DTX1. Interacts with SPART. Interacts with SNX9 and SNX18. Interacts (via its WW domains) with ATN1. Interacts (via WW domains) with SGK3. Interacts with CBLC. Interacts with OTUD7B. Interacts (via WW domain 1,2 and 3) with PI4K2A; the interaction inhibits PI4K2A catalytic activity and promotes ITCH catalytic activity. Interacts with ARRDC4. Part of a complex containing ITCH, NDFIP1 and MAP3K7. Interacts with UBE2L3; the interaction is mediated by NDFIP1. Interacts with MAPK8/JNK1. Interacts (via WW domains) with ARRDC1 (via PPxY motifs); the interaction is direct and participates in the recruitment of the ubiquitin-protein ligase ITCH to the NOTCH1 receptor. Interacts (via WW domains) with ARRDC2. Interacts (via WW domains) with ARRDC3. Interacts directly with LDLRAD3; this interaction promotes ITCH auto-ubiquitination leading to its degradation. Interacts with ENTREP1; enhances the ubiquitination of CXCR4 by ITCH and its subsequent endocytosis. Interacts with USP12 and WDR48/UAF1; the interaction is more efficient when both USP12 and WDR48/UAF1 are involved and may facilitate the recruitment of the USP12 deubiquitinase complex to Notch. As to quaternary structure, (Microbial infection) Interacts with Epstein-Barr virus LMP2A. On T-cell activation, phosphorylation by the JNK cascade on serine and threonine residues surrounding the PRR domain accelerates the ubiquitination and degradation of JUN and JUNB. The increased ITCH catalytic activity due to phosphorylation by JNK1 may occur due to a conformational change disrupting the interaction between the PRR/WW motifs domain and the HECT domain and, thus exposing the HECT domain. Phosphorylation by FYN reduces interaction with JUNB and negatively controls JUN ubiquitination and degradation. Interacts directly with LDLRAD3; this interaction promotes ITCH auto-ubiquitination leading to its degradation. Post-translationally, monoubiquitinated. Autopolyubiquitinated with 'Lys-63' linkages which does not lead to protein degradation. In terms of tissue distribution, detected in uterus (at protein level). Widely expressed.

The protein localises to the cell membrane. It is found in the cytoplasm. The protein resides in the nucleus. It localises to the early endosome membrane. Its subcellular location is the endosome membrane. The catalysed reaction is S-ubiquitinyl-[E2 ubiquitin-conjugating enzyme]-L-cysteine + [acceptor protein]-L-lysine = [E2 ubiquitin-conjugating enzyme]-L-cysteine + N(6)-ubiquitinyl-[acceptor protein]-L-lysine.. It participates in protein modification; protein ubiquitination. Activated by NDFIP1- and NDFIP2-binding. Activated by PI4K2A-binding. Inhibited by DTX3L-binding. Inhibited by N4BP1 binding. In terms of biological role, acts as an E3 ubiquitin-protein ligase which accepts ubiquitin from an E2 ubiquitin-conjugating enzyme in the form of a thioester and then directly transfers the ubiquitin to targeted substrates. It catalyzes 'Lys-29'-, 'Lys-48'- and 'Lys-63'-linked ubiquitin conjugation. Involved in the control of inflammatory signaling pathways. Is an essential component of a ubiquitin-editing protein complex, comprising also TNFAIP3, TAX1BP1 and RNF11, that ensures the transient nature of inflammatory signaling pathways. Promotes the association of the complex after TNF stimulation. Once the complex is formed, TNFAIP3 deubiquitinates 'Lys-63' polyubiquitin chains on RIPK1 and catalyzes the formation of 'Lys-48'-polyubiquitin chains. This leads to RIPK1 proteasomal degradation and consequently termination of the TNF- or LPS-mediated activation of NFKB1. Ubiquitinates RIPK2 by 'Lys-63'-linked conjugation and influences NOD2-dependent signal transduction pathways. Regulates the transcriptional activity of several transcription factors involved in immune response. Ubiquitinates NFE2 by 'Lys-63' linkages and is implicated in the control of the development of hematopoietic lineages. Mediates JUN ubiquitination and degradation. Mediates JUNB ubiquitination and degradation. Critical regulator of type 2 helper T (Th2) cell cytokine production by inducing JUNB ubiquitination and degradation. Involved in the negative regulation of MAVS-dependent cellular antiviral responses. Ubiquitinates MAVS through 'Lys-48'-linked conjugation resulting in MAVS proteasomal degradation. Following ligand stimulation, regulates sorting of Wnt receptor FZD4 to the degradative endocytic pathway probably by modulating PI42KA activity. Ubiquitinates PI4K2A and negatively regulates its catalytic activity. Ubiquitinates chemokine receptor CXCR4 and regulates sorting of CXCR4 to the degradative endocytic pathway following ligand stimulation by ubiquitinating endosomal sorting complex required for transport ESCRT-0 components HGS and STAM. Targets DTX1 for lysosomal degradation and controls NOTCH1 degradation, in the absence of ligand, through 'Lys-29'-linked polyubiquitination. Ubiquitinates SNX9. Ubiquitinates MAP3K7 through 'Lys-48'-linked conjugation. Together with UBR5, involved in the regulation of apoptosis and reactive oxygen species levels through the ubiquitination and proteasomal degradation of TXNIP: catalyzes 'Lys-48'-/'Lys-63'-branched ubiquitination of TXNIP. ITCH synthesizes 'Lys-63'-linked chains, while UBR5 is branching multiple 'Lys-48'-linked chains of substrate initially modified. Mediates the antiapoptotic activity of epidermal growth factor through the ubiquitination and proteasomal degradation of p15 BID. Ubiquitinates BRAT1 and this ubiquitination is enhanced in the presence of NDFIP1. Ubiquitinates NEDD9/HEF1, resulting in proteasomal degradation of NEDD9/HEF1. In Mus musculus (Mouse), this protein is E3 ubiquitin-protein ligase Itchy (Itch).